The sequence spans 230 residues: Probable septum site-determining protein MinC (230 aa).

The protein belongs to the MinC family. As to quaternary structure, interacts with MinD and FtsZ.

Cell division inhibitor that blocks the formation of polar Z ring septums. Rapidly oscillates between the poles of the cell to destabilize FtsZ filaments that have formed before they mature into polar Z rings. Prevents FtsZ polymerization. The polypeptide is Probable septum site-determining protein MinC (Erwinia tasmaniensis (strain DSM 17950 / CFBP 7177 / CIP 109463 / NCPPB 4357 / Et1/99)).